A 402-amino-acid polypeptide reads, in one-letter code: uncharacterized protein (402 aa).

12 helical membrane passes run 23-43 (IVSVVMFTFIGYLTIGIPLAV), 52-72 (LGYGSVLAGLVISLQYLATLL), 90-110 (VLYGMAGSAASGLFMLLSVAI), 121-141 (LLVGRLVLGAAESLVGSAAIG), 158-178 (WNGIASYGAIALGAPLGVLLV), 180-200 (WLGLWSMGASIVLLGALGFAL), 228-248 (GMGLALGAIGFGTIATFITLY), 255-275 (ANAVLCLSAFGGCFIGARLLF), 282-302 (LGGFRVAIICLGVESLGLLLL), 309-329 (WVGLAGAALTGFGFSLVFPAF), 351-371 (LFVDLSLGITGPLVGFVANLF), and 375-395 (SMFLFACLASLGGLALAVALH).

Belongs to the major facilitator superfamily. YhhS family.

Its subcellular location is the cell inner membrane. This is an uncharacterized protein from Pseudomonas aeruginosa (strain ATCC 15692 / DSM 22644 / CIP 104116 / JCM 14847 / LMG 12228 / 1C / PRS 101 / PAO1).